A 309-amino-acid chain; its full sequence is tRNA dimethylallyltransferase (309 aa).

10-17 (GPTAVGKT) is an ATP binding site. 12–17 (TAVGKT) is a substrate binding site. The segment at 35–38 (DSMQ) is interaction with substrate tRNA.

Belongs to the IPP transferase family. As to quaternary structure, monomer. Mg(2+) is required as a cofactor.

It carries out the reaction adenosine(37) in tRNA + dimethylallyl diphosphate = N(6)-dimethylallyladenosine(37) in tRNA + diphosphate. Catalyzes the transfer of a dimethylallyl group onto the adenine at position 37 in tRNAs that read codons beginning with uridine, leading to the formation of N6-(dimethylallyl)adenosine (i(6)A). This chain is tRNA dimethylallyltransferase, found in Clostridium botulinum (strain Eklund 17B / Type B).